Consider the following 146-residue polypeptide: Hemoglobin cathodic subunit beta (146 aa).

The region spanning 2 to 146 (EWSASERSTI…VVSALSKQYF (145 aa)) is the Globin domain. The heme b site is built by His-63 and His-92.

The protein belongs to the globin family. Heterotetramer of two alpha chains and two beta chains. In terms of tissue distribution, red blood cells.

In terms of biological role, involved in oxygen transport from gills to the various peripheral tissues. In Anguilla anguilla (European freshwater eel), this protein is Hemoglobin cathodic subunit beta (hbb2).